We begin with the raw amino-acid sequence, 1583 residues long: Pentafunctional AROM polypeptide (1583 aa).

A 3-dehydroquinate synthase region spans residues methionine 1–asparagine 384. NAD(+) is bound by residues aspartate 44–asparagine 46, glutamate 81–lysine 84, glycine 114–valine 116, and aspartate 119. A 7-phospho-2-dehydro-3-deoxy-D-arabino-heptonate-binding site is contributed by arginine 130. Threonine 139–threonine 140 contributes to the NAD(+) binding site. Positions 146 and 152 each coordinate 7-phospho-2-dehydro-3-deoxy-D-arabino-heptonate. Residue lysine 161 coordinates NAD(+). A 7-phospho-2-dehydro-3-deoxy-D-arabino-heptonate-binding site is contributed by asparagine 162. Residues phenylalanine 179–threonine 182 and asparagine 190 contribute to the NAD(+) site. Zn(2+) is bound at residue glutamate 194. Residues glutamate 194–lysine 197 and lysine 250 each bind 7-phospho-2-dehydro-3-deoxy-D-arabino-heptonate. The Proton acceptor; for 3-dehydroquinate synthase activity role is filled by glutamate 260. 7-phospho-2-dehydro-3-deoxy-D-arabino-heptonate contacts are provided by residues arginine 264–asparagine 268 and histidine 271. Histidine 271 provides a ligand contact to Zn(2+). The active-site Proton acceptor; for 3-dehydroquinate synthase activity is the histidine 275. 2 residues coordinate 7-phospho-2-dehydro-3-deoxy-D-arabino-heptonate: histidine 287 and lysine 356. Histidine 287 provides a ligand contact to Zn(2+). An EPSP synthase region spans residues valine 397–valine 842. The active-site For EPSP synthase activity is cysteine 824. The segment at asparagine 863 to serine 1055 is shikimate kinase. Residue glycine 870 to serine 877 coordinates ATP. The 3-dehydroquinase stretch occupies residues leucine 1056 to glutamate 1276. Catalysis depends on histidine 1179, which acts as the Proton acceptor; for 3-dehydroquinate dehydratase activity. Lysine 1207 (schiff-base intermediate with substrate; for 3-dehydroquinate dehydratase activity) is an active-site residue. Residues proline 1289–isoleucine 1583 form a shikimate dehydrogenase region.

It in the N-terminal section; belongs to the sugar phosphate cyclases superfamily. Dehydroquinate synthase family. In the 2nd section; belongs to the EPSP synthase family. This sequence in the 3rd section; belongs to the shikimate kinase family. The protein in the 4th section; belongs to the type-I 3-dehydroquinase family. It in the C-terminal section; belongs to the shikimate dehydrogenase family. Homodimer. It depends on Zn(2+) as a cofactor.

It is found in the cytoplasm. The enzyme catalyses 7-phospho-2-dehydro-3-deoxy-D-arabino-heptonate = 3-dehydroquinate + phosphate. The catalysed reaction is 3-dehydroquinate = 3-dehydroshikimate + H2O. It carries out the reaction shikimate + NADP(+) = 3-dehydroshikimate + NADPH + H(+). It catalyses the reaction shikimate + ATP = 3-phosphoshikimate + ADP + H(+). The enzyme catalyses 3-phosphoshikimate + phosphoenolpyruvate = 5-O-(1-carboxyvinyl)-3-phosphoshikimate + phosphate. It participates in metabolic intermediate biosynthesis; chorismate biosynthesis; chorismate from D-erythrose 4-phosphate and phosphoenolpyruvate: step 2/7. It functions in the pathway metabolic intermediate biosynthesis; chorismate biosynthesis; chorismate from D-erythrose 4-phosphate and phosphoenolpyruvate: step 3/7. The protein operates within metabolic intermediate biosynthesis; chorismate biosynthesis; chorismate from D-erythrose 4-phosphate and phosphoenolpyruvate: step 4/7. Its pathway is metabolic intermediate biosynthesis; chorismate biosynthesis; chorismate from D-erythrose 4-phosphate and phosphoenolpyruvate: step 5/7. It participates in metabolic intermediate biosynthesis; chorismate biosynthesis; chorismate from D-erythrose 4-phosphate and phosphoenolpyruvate: step 6/7. In terms of biological role, the AROM polypeptide catalyzes 5 consecutive enzymatic reactions in prechorismate polyaromatic amino acid biosynthesis. This is Pentafunctional AROM polypeptide (aromA) from Emericella nidulans (strain FGSC A4 / ATCC 38163 / CBS 112.46 / NRRL 194 / M139) (Aspergillus nidulans).